Here is a 162-residue protein sequence, read N- to C-terminus: D-aminoacyl-tRNA deacylase (162 aa).

The short motif at 145 to 146 is the Gly-cisPro motif, important for rejection of L-amino acids element; it reads GP.

Belongs to the DTD family. As to quaternary structure, homodimer.

The protein localises to the cytoplasm. It catalyses the reaction glycyl-tRNA(Ala) + H2O = tRNA(Ala) + glycine + H(+). The enzyme catalyses a D-aminoacyl-tRNA + H2O = a tRNA + a D-alpha-amino acid + H(+). Functionally, an aminoacyl-tRNA editing enzyme that deacylates mischarged D-aminoacyl-tRNAs. Also deacylates mischarged glycyl-tRNA(Ala), protecting cells against glycine mischarging by AlaRS. Acts via tRNA-based rather than protein-based catalysis; rejects L-amino acids rather than detecting D-amino acids in the active site. By recycling D-aminoacyl-tRNA to D-amino acids and free tRNA molecules, this enzyme counteracts the toxicity associated with the formation of D-aminoacyl-tRNA entities in vivo and helps enforce protein L-homochirality. The polypeptide is D-aminoacyl-tRNA deacylase (Bifidobacterium longum (strain NCC 2705)).